Here is a 488-residue protein sequence, read N- to C-terminus: MDHSIGGRNCQSGGTTASAPRSTGSDEFPSKLRETCHACSLSKVRCSKEKPSCSRCAKRGVPCEYIVTKRPGRKRDPTKSAGLTSSHCKSFDAATAAPNNTNANCAWLEDVLLTDMGGSGGGSTGHAYLDSTQTDTGSPMLWPLMANDGADIAGDMSDFLMPLITPLSCTFTARTPDFLSAAAEFSAPISPPNNHDDKNNNQSMQDGSNVMQLLLPDDVHGGHAAENAAQEAPSVDFHSSCSSRSLSSVPESFLSSKIASNSDFGSASSSCECLIKALDIMAKVSSTDLAVTPDTPSTRRNSVQDEAVVAGHDQTSPLLHATFMANKQTIEALSNMLHGSCQENVYLLTCMSMIVFKVLRRYEMAAGQSISAGVLDMHEAARPRHGDLDRDSLRRAAAQLVLGELHLVQQLVSRLSRRLQLSMDKTPNDGADSELSDSTLATRVFTLDEDDKADTSAFSAATLSQMDHDLRKGLARLSSNIINMLRRL.

Residues 1–29 are disordered; it reads MDHSIGGRNCQSGGTTASAPRSTGSDEFP. Over residues 9-25 the composition is skewed to polar residues; that stretch reads NCQSGGTTASAPRSTGS. A DNA-binding region (zn(2)-C6 fungal-type) is located at residues 36-63; it reads CHACSLSKVRCSKEKPSCSRCAKRGVPC.

The protein localises to the nucleus. Its function is as follows. Transcription factor; part of the gene cluster responsible for the typical purple-black color of the ergot sclerotia. The ergochrome gene cluster produces several ergot pigments including the yellow ergochrome secalonic acid and its derivatives, as well as the red anthraquinones endocrocin and clavorubin. The protein is Ergochrome gene cluster transcriptional regulator CPUR_05433 of Claviceps purpurea (strain 20.1) (Ergot fungus).